Reading from the N-terminus, the 175-residue chain is NADH dehydrogenase [ubiquinone] iron-sulfur protein 4, mitochondrial (175 aa).

The transit peptide at 1 to 42 (MAAVSMSVALRQALWGRRVATVAAVSVSKVSTRSLSTSTWRL) directs the protein to the mitochondrion. The disordered stretch occupies residues 149 to 175 (ERKVPKPKSKSYGANFSWNKRTRVSTK). The residue at position 173 (serine 173) is a Phosphoserine.

It belongs to the complex I NDUFS4 subunit family. Mammalian complex I is composed of 45 different subunits. This is a component of the iron-sulfur (IP) fragment of the enzyme. Interacts with BCAP31 and TOMM40; the interaction mediates its translocation to the mitochondria; the interaction with BCAP31 is direct. In terms of processing, phosphorylated.

Its subcellular location is the mitochondrion inner membrane. Its function is as follows. Accessory subunit of the mitochondrial membrane respiratory chain NADH dehydrogenase (Complex I), that is believed not to be involved in catalysis. Complex I functions in the transfer of electrons from NADH to the respiratory chain. The immediate electron acceptor for the enzyme is believed to be ubiquinone. The sequence is that of NADH dehydrogenase [ubiquinone] iron-sulfur protein 4, mitochondrial (NDUFS4) from Bos taurus (Bovine).